The sequence spans 192 residues: Nucleosome assembly protein 1-like 5 (192 aa).

The segment covering 1-12 (MADSQNQGSAEP) has biased composition (polar residues). Residues 1 to 76 (MADSQNQGSA…APKPRNDFIE (76 aa)) are disordered. 2 stretches are compositionally biased toward low complexity: residues 15-28 (AAAA…AAAA) and 40-55 (GDSD…VVGQ). The stretch at 86–112 (VLALKKLQKRCDKIEAKFDKEFQALEK) forms a coiled coil. Residues 136 to 192 (AWTLEGDEEDDDDDEYEDEEEGEEEDEEEEEPAAEAAGTAAAKDEGPHSAVPDDAKK) are disordered. Positions 140–168 (EGDEEDDDDDEYEDEEEGEEEDEEEEEPA) are enriched in acidic residues. Basic and acidic residues predominate over residues 177-192 (AKDEGPHSAVPDDAKK).

This sequence belongs to the nucleosome assembly protein (NAP) family.

Its subcellular location is the nucleus. The protein is Nucleosome assembly protein 1-like 5 (NAP1L5) of Bos taurus (Bovine).